The chain runs to 132 residues: Agouti-related protein (132 aa).

Residues 1 to 20 (MLTAAVLSCALLLALPATRG) form the signal peptide. Positions 21-82 (AQMGLAPMEG…VLDLQDREPR (62 aa)) are excised as a propeptide. 5 disulfides stabilise this stretch: cysteine 87–cysteine 102, cysteine 94–cysteine 108, cysteine 101–cysteine 119, cysteine 105–cysteine 129, and cysteine 110–cysteine 117. An Agouti domain is found at 87 to 129 (CVRLHESCLGQQVPCCDPCATCYCRFFNAFCYCRKLGTAMNPC). Residues 111–113 (RFF) are interaction with melanocortin receptors.

In terms of assembly, interacts with melanocortin receptors MC3R, MC4R and MC5R. In terms of tissue distribution, expressed primarily in the adrenal gland, subthalamic nucleus, and hypothalamus, with a lower level of expression occurring in testis, lung, and kidney.

The protein resides in the secreted. It is found in the golgi apparatus lumen. In terms of biological role, plays a role in weight homeostasis. Involved in the control of feeding behavior through the central melanocortin system. Acts as alpha melanocyte-stimulating hormone antagonist by inhibiting cAMP production mediated by stimulation of melanocortin receptors within the hypothalamus and adrenal gland. Has very low activity with MC5R. Is an inverse agonist for MC3R and MC4R being able to suppress their constitutive activity. It promotes MC3R and MC4R endocytosis in an arrestin-dependent manner. The protein is Agouti-related protein (AGRP) of Homo sapiens (Human).